Here is a 310-residue protein sequence, read N- to C-terminus: Pantothenate kinase (310 aa).

95 to 102 is an ATP binding site; the sequence is GSVAVGKS.

It belongs to the prokaryotic pantothenate kinase family.

The protein localises to the cytoplasm. The catalysed reaction is (R)-pantothenate + ATP = (R)-4'-phosphopantothenate + ADP + H(+). It functions in the pathway cofactor biosynthesis; coenzyme A biosynthesis; CoA from (R)-pantothenate: step 1/5. The protein is Pantothenate kinase of Rhodococcus erythropolis (strain PR4 / NBRC 100887).